Here is a 587-residue protein sequence, read N- to C-terminus: Aspartate--tRNA ligase (587 aa).

Residue Glu-175 participates in L-aspartate binding. An aspartate region spans residues 199–202 (QQFK). Arg-221 and His-446 together coordinate L-aspartate. Residue 221–223 (RDE) coordinates ATP. Glu-480 contacts ATP. Arg-487 is a binding site for L-aspartate. 532–535 (GVDR) contacts ATP.

It belongs to the class-II aminoacyl-tRNA synthetase family. Type 1 subfamily. Homodimer.

The protein resides in the cytoplasm. The enzyme catalyses tRNA(Asp) + L-aspartate + ATP = L-aspartyl-tRNA(Asp) + AMP + diphosphate. In terms of biological role, catalyzes the attachment of L-aspartate to tRNA(Asp) in a two-step reaction: L-aspartate is first activated by ATP to form Asp-AMP and then transferred to the acceptor end of tRNA(Asp). In Streptomyces coelicolor (strain ATCC BAA-471 / A3(2) / M145), this protein is Aspartate--tRNA ligase.